The primary structure comprises 850 residues: Tripartite terminase subunit 1 (850 aa).

A C3H1-type zinc finger spans residues 191–219 (CAQCYEELTIIPNQGRSLNKRLQGLLCNH). The tract at residues 438-489 (GTTLMTASNSSNSSTHSQRNNGGGGRARGGGKKVVGGGVNGQDGDGSENGLR) is disordered. Residues 439 to 457 (TTLMTASNSSNSSTHSQRN) are compositionally biased toward low complexity. Over residues 458 to 481 (NGGGGRARGGGKKVVGGGVNGQDG) the composition is skewed to gly residues. An ATP-binding site is contributed by 709 to 716 (YNETFGKQ). A disordered region spans residues 801–831 (WLPSPYPSSSTAGVSRRVRATRKRPRRASSL). Residues 816-827 (RRVRATRKRPRR) show a composition bias toward basic residues. Positions 822 to 827 (RKRPRR) match the Nuclear localization signal motif.

Belongs to the herpesviridae TRM1 protein family. As to quaternary structure, associates with TRM2 and TRM3 to form the tripartite terminase complex. Interacts with portal protein.

The protein localises to the host nucleus. Component of the molecular motor that translocates viral genomic DNA in empty capsid during DNA packaging. Forms a tripartite terminase complex together with TRM2 and TRM3 in the host cytoplasm. Once the complex reaches the host nucleus, it interacts with the capsid portal vertex. This portal forms a ring in which genomic DNA is translocated into the capsid. TRM1 carries an endonuclease activity that plays an important role for the cleavage of concatemeric viral DNA into unit length genomes. The chain is Tripartite terminase subunit 1 from Homo sapiens (Human).